The following is a 598-amino-acid chain: Probable translation initiation factor IF-2 (598 aa).

A tr-type G domain is found at 3-225 (LRCPIVSVLG…GLAQKFLEQK (223 aa)). The segment at 12–19 (GHVDHGKT) is G1. GTP is bound at residue 12 to 19 (GHVDHGKT). A G2 region spans residues 37-41 (GITQH). A G3 region spans residues 76–79 (DTPG). GTP contacts are provided by residues 76–80 (DTPGH) and 130–133 (NKLD). The interval 130-133 (NKLD) is G4. A G5 region spans residues 200-202 (SAM).

The protein belongs to the TRAFAC class translation factor GTPase superfamily. Classic translation factor GTPase family. IF-2 subfamily.

Function in general translation initiation by promoting the binding of the formylmethionine-tRNA to ribosomes. Seems to function along with eIF-2. The sequence is that of Probable translation initiation factor IF-2 from Methanococcus maripaludis (strain C6 / ATCC BAA-1332).